We begin with the raw amino-acid sequence, 702 residues long: MAKQVFKKIINNQELIVEHGQLAKQASGSVLVRYGDTVVLVTATVNNKLSEVDFFPLTVVFQEKLYSVGKIPGGFLKREGKPSEYGTLSARVIDRALRPLFSENFRNEVQIVINVLAVDNDNDVRMVSLFAASLALSISKIPFAGPVAGALVTVDQKNNIIINPTLEQINDGQMELIVAGTDEAINMVEAGAKEVSENLMLQAILAGHDVIQQLIAFQHEIIAKVGVPKMEVELFQVRPEIITYVNNNYAKDLITAARIKEKTKRYETIEHLIEQAIKNYPMPVSLSEKEQKQLTVELKTALHNIIRQEVRRQILIDKTRLDGRKLDQIRPLSSEIDILPVVHGSALFTRGETQVLSVVTLGALGENQIIDGITDEESKRFMHHYNFPAFSVGETGRMGPPSRREIGHGALGEKVLLQIIPSEKVFPYTIRIVSEVLESNGSTSQASICAATLALMAAGVPITAPVVGIAMGLIKEKNNYTILTDIQGMEDHLGDMDFKVAGTATGICALQMDIKIVGINKAILQEALKAAKKARLTILDNVLATISAPRTHLAPTAPKMKTFMIPVDKIREVIGPGGKMITAIIEKSDDVKIDIEDDGQVTIYHKETTAIEKAYQLIKAIAMPVVVGEKIIGPVVKIEKFGVFVHLKENLDGLIHISKLAKQHVEKAEDIVQLNDIVKVKVIEIDGKGKIKLQLIEILPKK.

Mg(2+)-binding residues include D491 and D497. One can recognise a KH domain in the interval 558–618 (PKMKTFMIPV…TAIEKAYQLI (61 aa)). The 69-residue stretch at 628–696 (GEKIIGPVVK…GKGKIKLQLI (69 aa)) folds into the S1 motif domain.

Belongs to the polyribonucleotide nucleotidyltransferase family. It depends on Mg(2+) as a cofactor.

The protein localises to the cytoplasm. The enzyme catalyses RNA(n+1) + phosphate = RNA(n) + a ribonucleoside 5'-diphosphate. Its function is as follows. Involved in mRNA degradation. Catalyzes the phosphorolysis of single-stranded polyribonucleotides processively in the 3'- to 5'-direction. The chain is Polyribonucleotide nucleotidyltransferase from Spiroplasma citri.